Consider the following 534-residue polypeptide: Peptide chain release factor 3 (534 aa).

Residues 9-278 (ARRRTFAIIS…FFIEHAPPPQ (270 aa)) form the tr-type G domain. GTP contacts are provided by residues 18–25 (SHPDAGKT), 86–90 (DTPGH), and 140–143 (NKLD).

It belongs to the TRAFAC class translation factor GTPase superfamily. Classic translation factor GTPase family. PrfC subfamily.

Its subcellular location is the cytoplasm. Increases the formation of ribosomal termination complexes and stimulates activities of RF-1 and RF-2. It binds guanine nucleotides and has strong preference for UGA stop codons. It may interact directly with the ribosome. The stimulation of RF-1 and RF-2 is significantly reduced by GTP and GDP, but not by GMP. This chain is Peptide chain release factor 3, found in Xanthomonas oryzae pv. oryzae (strain MAFF 311018).